Here is a 591-residue protein sequence, read N- to C-terminus: Aspartate--tRNA(Asp/Asn) ligase (591 aa).

E175 lines the L-aspartate pocket. The tract at residues 199–202 (QQFK) is aspartate. L-aspartate is bound by residues R221 and H453. 221–223 (RDE) lines the ATP pocket. ATP is bound at residue E486. R493 is a binding site for L-aspartate. 538-541 (GIDR) contributes to the ATP binding site.

Belongs to the class-II aminoacyl-tRNA synthetase family. Type 1 subfamily. In terms of assembly, homodimer.

Its subcellular location is the cytoplasm. The enzyme catalyses tRNA(Asx) + L-aspartate + ATP = L-aspartyl-tRNA(Asx) + AMP + diphosphate. Functionally, aspartyl-tRNA synthetase with relaxed tRNA specificity since it is able to aspartylate not only its cognate tRNA(Asp) but also tRNA(Asn). Reaction proceeds in two steps: L-aspartate is first activated by ATP to form Asp-AMP and then transferred to the acceptor end of tRNA(Asp/Asn). This chain is Aspartate--tRNA(Asp/Asn) ligase, found in Cereibacter sphaeroides (strain ATCC 17029 / ATH 2.4.9) (Rhodobacter sphaeroides).